A 487-amino-acid chain; its full sequence is Cysteine--tRNA ligase (487 aa).

Cys-27 serves as a coordination point for Zn(2+). The short motif at 29-39 (VTVYDLCHIGH) is the 'HIGH' region element. 3 residues coordinate Zn(2+): Cys-211, His-236, and Glu-240. The 'KMSKS' region motif lies at 268 to 272 (KMSKS). An ATP-binding site is contributed by Lys-271.

It belongs to the class-I aminoacyl-tRNA synthetase family. As to quaternary structure, monomer. Zn(2+) is required as a cofactor.

The protein resides in the cytoplasm. The catalysed reaction is tRNA(Cys) + L-cysteine + ATP = L-cysteinyl-tRNA(Cys) + AMP + diphosphate. This chain is Cysteine--tRNA ligase, found in Thermodesulfovibrio yellowstonii (strain ATCC 51303 / DSM 11347 / YP87).